The chain runs to 76 residues: Precursor of CEP7 (76 aa).

Positions 1 to 27 are cleaved as a signal peptide; the sequence is MAKCTLTSLILLLIVLVLIQESHIVEG. A propeptide spanning residues 28–61 is cleaved from the precursor; sequence RPLKSSRISNVSKKFAAGNSNLSSKLTTEDHSLD. Residues N37 and N48 are each glycosylated (N-linked (GlcNAc...) asparagine). The disordered stretch occupies residues 49-76; that stretch reads LSSKLTTEDHSLDAFRPTNPGNSPGIGH. Hydroxyproline is present on residues P65, P68, and P72.

The protein belongs to the C-terminally encoded plant signaling peptide (CEP) family. As to quaternary structure, interacts with CEP receptors (e.g. CEPR1 and CEPR2). Post-translationally, the mature small signaling peptide is generated by proteolytic processing of the longer precursor.

It localises to the secreted. Its subcellular location is the extracellular space. The protein localises to the apoplast. In terms of biological role, extracellular signaling peptide that may regulate primary root growth rate and systemic nitrogen (N)-demand signaling. Mediates up-regulation of genes involved in N uptake and assimilation pathways. In Arabidopsis thaliana (Mouse-ear cress), this protein is Precursor of CEP7.